Consider the following 541-residue polypeptide: Chaperonin GroEL 2 (541 aa).

ATP-binding positions include 29-32 (TLGP), 86-90 (DGTTT), G413, 476-478 (NAA), and D492.

This sequence belongs to the chaperonin (HSP60) family. As to quaternary structure, forms a cylinder of 14 subunits composed of two heptameric rings stacked back-to-back. Interacts with the co-chaperonin GroES.

The protein localises to the cytoplasm. It catalyses the reaction ATP + H2O + a folded polypeptide = ADP + phosphate + an unfolded polypeptide.. In terms of biological role, together with its co-chaperonin GroES, plays an essential role in assisting protein folding. The GroEL-GroES system forms a nano-cage that allows encapsulation of the non-native substrate proteins and provides a physical environment optimized to promote and accelerate protein folding. This chain is Chaperonin GroEL 2, found in Streptomyces avermitilis (strain ATCC 31267 / DSM 46492 / JCM 5070 / NBRC 14893 / NCIMB 12804 / NRRL 8165 / MA-4680).